The sequence spans 155 residues: UPF0266 membrane protein lin0773 (155 aa).

The next 3 helical transmembrane spans lie at 8–28 (IFLF…DAVI), 46–66 (RWDG…NTFF), and 70–90 (PFST…ICFF).

This sequence belongs to the UPF0266 family.

It localises to the cell membrane. This is UPF0266 membrane protein lin0773 from Listeria innocua serovar 6a (strain ATCC BAA-680 / CLIP 11262).